We begin with the raw amino-acid sequence, 215 residues long: UPF0126 membrane protein DR_2368 (215 aa).

The next 6 membrane-spanning stretches (helical) occupy residues 15–35 (LHWL…LLGV), 39–59 (FDLF…GAIR), 75–95 (TYLW…ERLA), 101–121 (LSLF…LGAI), 123–143 (IGLG…GGGI), and 162–182 (LYAT…PHFT).

It belongs to the UPF0126 family.

Its subcellular location is the cell membrane. This is UPF0126 membrane protein DR_2368 from Deinococcus radiodurans (strain ATCC 13939 / DSM 20539 / JCM 16871 / CCUG 27074 / LMG 4051 / NBRC 15346 / NCIMB 9279 / VKM B-1422 / R1).